We begin with the raw amino-acid sequence, 314 residues long: Olfactory receptor 5B12 (314 aa).

Over 1 to 23 the chain is Extracellular; sequence MENNTEVTEFILVGLTDDPELQI. Asparagine 3 carries N-linked (GlcNAc...) asparagine glycosylation. The helical transmembrane segment at 24–44 threads the bilayer; sequence PLFIVFLFIYLITLVGNLGMI. At 45-52 the chain is on the cytoplasmic side; it reads ELILLDSC. The chain crosses the membrane as a helical span at residues 53–73; that stretch reads LHTPMYFFLSNLSLVDFGYSS. Residues 74–97 are Extracellular-facing; that stretch reads AVTPKVMVGFLTGDKFILYNACAT. Cysteine 95 and cysteine 187 form a disulfide bridge. The chain crosses the membrane as a helical span at residues 98–118; sequence QFFFFVAFITAESFLLASMAY. The Cytoplasmic segment spans residues 119 to 137; that stretch reads DRYAALCKPLHYTTTMTTN. A helical membrane pass occupies residues 138–158; the sequence is VCACLAIGSYICGFLNASIHT. The Extracellular portion of the chain corresponds to 159–194; it reads GNTFRLSFCRSNVVEHFFCDAPPLLTLSCSDNYISE. A helical transmembrane segment spans residues 195 to 215; that stretch reads MVIFFVVGFNDLFSILVILIS. At 216 to 235 the chain is on the cytoplasmic side; sequence YLFIFITIMKMRSPEGRQKA. Residues 236 to 256 traverse the membrane as a helical segment; it reads FSTCASHLTAVSIFYGTGIFM. The Extracellular segment spans residues 257 to 269; it reads YLRPNSSHFMGTD. Asparagine 261 carries N-linked (GlcNAc...) asparagine glycosylation. A helical membrane pass occupies residues 270-290; sequence KMASVFYAIVIPMLNPLVYSL. Topologically, residues 291 to 314 are cytoplasmic; that stretch reads RNKEVKSAFKKTVGKAKASIGFIF.

This sequence belongs to the G-protein coupled receptor 1 family.

The protein localises to the cell membrane. Its function is as follows. Odorant receptor. The sequence is that of Olfactory receptor 5B12 (OR5B12) from Homo sapiens (Human).